Here is a 150-residue protein sequence, read N- to C-terminus: Histone H3-like centromeric protein A (150 aa).

The segment at 1-55 (MRPGSTPPSRRKSRPPRRVSPPLPTTSRTSPRRPHAQQQRRASRASPKKRFRPGT) is disordered. Basic residues predominate over residues 41 to 53 (RASRASPKKRFRP). Positions 53 to 150 (PGTRALMEIR…RIRGVNEGLG (98 aa)) are H3-like.

This sequence belongs to the histone H3 family. Component of centromeric nucleosomes, where DNA is wrapped around a histone octamer core. The octamer contains two molecules each of H2A, H2B, CENPA and H4 assembled in one CENPA-H4 heterotetramer and two H2A-H2B heterodimers. CENPA modulates the DNA-binding characteristics of nucleosomes so that protruding DNA ends have higher flexibility than in nucleosomes containing conventional histone H3.

Its subcellular location is the nucleus. The protein resides in the chromosome. It localises to the centromere. Its function is as follows. Histone H3-like nucleosomal protein that is specifically found in centromeric nucleosomes. Replaces conventional H3 in the nucleosome core of centromeric chromatin that serves as an assembly site for the inner kinetochore. The presence of CENPA subtly modifies the nucleosome structure and the way DNA is wrapped around the nucleosome and gives rise to protruding DNA ends that are less well-ordered and rigid compared to nucleosomes containing histone H3. May serve as an epigenetic mark that propagates centromere identity through replication and cell division. Required for recruitment and assembly of kinetochore proteins, and as a consequence required for progress through mitosis, chromosome segregation and cytokinesis. The chain is Histone H3-like centromeric protein A (cenpa) from Xenopus laevis (African clawed frog).